Consider the following 183-residue polypeptide: MVRKLKHHEQKLLKKVDFLEWKQDQGHRDTQVMRTYHIQNREDYHKYNRICGDIRRLANKLSLLPPTDPFRRKHEQLLLDKLYAMGVLTTKSKISDLENKVTVSAICRRRLPVIMHRLKMAETIQDAVKFIEQGHVRVGPNLINDPAYLVTRNMEDYVTWVDNSKIKKTLLRYRNQIDDFDFS.

The 67-residue stretch at 109–175 folds into the S4 RNA-binding domain; it reads RRLPVIMHRL…IKKTLLRYRN (67 aa).

It belongs to the universal ribosomal protein uS4 family. Component of a heterotrimeric complex containing IMP3, IMP4 and MPP10. Interacts with MPP10. Component of the ribosomal small subunit (SSU) processome composed of at least 40 protein subunits and snoRNA U3.

It is found in the nucleus. The protein resides in the nucleolus. Its function is as follows. Required for the early cleavages at sites A0, A1 and A2 during 18S ribosomal pre-RNA processing. This Saccharomyces cerevisiae (strain ATCC 204508 / S288c) (Baker's yeast) protein is U3 small nucleolar ribonucleoprotein protein IMP3 (IMP3).